Reading from the N-terminus, the 85-residue chain is Putative membrane protein insertion efficiency factor (85 aa).

It belongs to the UPF0161 family.

The protein resides in the cell membrane. Could be involved in insertion of integral membrane proteins into the membrane. This chain is Putative membrane protein insertion efficiency factor, found in Buchnera aphidicola subsp. Baizongia pistaciae (strain Bp).